The following is a 465-amino-acid chain: Clusterin-like protein 1 (465 aa).

An N-terminal signal peptide occupies residues Met1 to Cys20. Residues Met62–Gln106 are a coiled coil. Intrachain disulfides connect Cys105/Cys333, Cys116/Cys325, Cys119/Cys322, and Cys124/Cys315. N-linked (GlcNAc...) asparagine glycosylation is found at Asn196, Asn257, Asn285, Asn311, Asn351, Asn412, and Asn430.

The protein belongs to the clusterin family. In terms of tissue distribution, retina-specific (at protein level). In the light-adapted retina, expressed in the outer segment of cone photoreceptors. In the dark-adapted retina, strongly expressed in the outer plexiform layer in the region of contact between the cone pedicles and second order neurons with little or no expression in the cone photoreceptor outer segments.

Its subcellular location is the secreted. This Canis lupus familiaris (Dog) protein is Clusterin-like protein 1 (CLUL1).